We begin with the raw amino-acid sequence, 89 residues long: Sec-independent protein translocase protein TatA (89 aa).

A helical membrane pass occupies residues 1–21 (MGGISIWQLLIIAVIVVLLFG). A disordered region spans residues 65-89 (ADKQADTNQEQAKTEDAKRHDKEQV). A compositionally biased stretch (basic and acidic residues) spans 76–89 (AKTEDAKRHDKEQV).

Belongs to the TatA/E family. As to quaternary structure, the Tat system comprises two distinct complexes: a TatABC complex, containing multiple copies of TatA, TatB and TatC subunits, and a separate TatA complex, containing only TatA subunits. Substrates initially bind to the TatABC complex, which probably triggers association of the separate TatA complex to form the active translocon.

Its subcellular location is the cell inner membrane. In terms of biological role, part of the twin-arginine translocation (Tat) system that transports large folded proteins containing a characteristic twin-arginine motif in their signal peptide across membranes. TatA could form the protein-conducting channel of the Tat system. In Shigella flexneri, this protein is Sec-independent protein translocase protein TatA.